Reading from the N-terminus, the 848-residue chain is Glutenin, high molecular weight subunit DX5 (848 aa).

The signal sequence occupies residues 1–21 (MAKRLVLFVAVVVALVALTVA). Residues 124–804 (YYPGQASPQR…GQQSGQGQQG (681 aa)) form a disordered region. Composition is skewed to low complexity over residues 126–137 (PGQASPQRPGQG), 145–166 (QGYY…QGQP), 173–203 (PQQS…GQPG), 210–240 (QLQP…PGQG), 263–303 (QGQQ…GQSG), 310–351 (QQPG…PGQG), 359–411 (PGYY…PGQG), 419–468 (PGYY…PGQG), 476–527 (QGQQ…YPTS), 544–659 (QQPG…QGQP), 670–687 (GQGQ…GQPG), 709–727 (QQPG…GQGQ), and 739–795 (GQGQ…TGQG).

The protein belongs to the gliadin/glutenin family. Disulfide-bridge linked aggregates.

Functionally, glutenins are high-molecular weight seed storage proteins of wheat endosperm. Thought to be responsible for the visco-elastic property of wheat dough. In Triticum aestivum (Wheat), this protein is Glutenin, high molecular weight subunit DX5 (GLU-1D-1D).